The chain runs to 567 residues: MSEITLGRFFFERLHQLKVDTVFGLPGDFNLALLDKIYEVEGMRWAGNANELNAGYAADGYARVNPNGLSALVSTFGVGELSLTNAIAGSYSEHVGVINLVGVPSSSAQAKQLLLHHTLGNGDFTVFHRMFKNISQTSAFIADINSAPAEIDRCIRDAYVYQRPVYIGLPSNLVDMKVPKSLLDKKIDLSLHPNDPESQTEVIETVEKLISEASNPVILVDACAIRHNCKPEVAKLIEETQFPVFTTPMGKSSVDESNPRFGGVYVGSLSKPEVKESVESADLILSIGALLSDFNTGSFSYGYKTRNIVEFHSDYTKIRQATFPGVQMKEALQKLLTTVKKSINPNYTPVPVPETKLINTPAAPSTPLTQEYLWTKVSSWFREGDIIITETGTSAFGIVQSRFPKNSIGISQVLWGSIGYTVGATCGAAMAAQELDPKRRVILFVGDGSLQLTVQEISTMCKWECNNTYLFVLNNDGYTIERLIHGEKAQYNDIQPWNNLQLLPLFNAKDYETKRISTVGELNDLFADKAFAVPDKIRMVEVMLPTMDAPANLVAQAKLSEKTNAEQ.

Residues Asp28 and His117 each contribute to the pyruvate site. Residues Thr393 and 416-418 (GSI) contribute to the thiamine diphosphate site. Position 447 (Asp447) interacts with Mg(2+). Residues 448 to 449 (GS) and 475 to 480 (NDGYTI) contribute to the thiamine diphosphate site. The Mg(2+) site is built by Asn475 and Gly477. Glu481 serves as a coordination point for pyruvate.

This sequence belongs to the TPP enzyme family. Homotetramer. Requires Mg(2+) as cofactor. Thiamine diphosphate serves as cofactor.

The protein localises to the cytoplasm. It carries out the reaction a 2-oxocarboxylate + H(+) = an aldehyde + CO2. The enzyme catalyses pyruvate + H(+) = acetaldehyde + CO2. This Candida albicans (strain SC5314 / ATCC MYA-2876) (Yeast) protein is Pyruvate decarboxylase (PDC11).